The following is a 362-amino-acid chain: Nicotinate-nucleotide--dimethylbenzimidazole phosphoribosyltransferase (362 aa).

E321 functions as the Proton acceptor in the catalytic mechanism.

The protein belongs to the CobT family.

The enzyme catalyses 5,6-dimethylbenzimidazole + nicotinate beta-D-ribonucleotide = alpha-ribazole 5'-phosphate + nicotinate + H(+). It participates in nucleoside biosynthesis; alpha-ribazole biosynthesis; alpha-ribazole from 5,6-dimethylbenzimidazole: step 1/2. Functionally, catalyzes the synthesis of alpha-ribazole-5'-phosphate from nicotinate mononucleotide (NAMN) and 5,6-dimethylbenzimidazole (DMB). This is Nicotinate-nucleotide--dimethylbenzimidazole phosphoribosyltransferase from Clostridium tetani (strain Massachusetts / E88).